The primary structure comprises 185 residues: Ribosome-recycling factor (185 aa).

Belongs to the RRF family.

It is found in the cytoplasm. Its function is as follows. Responsible for the release of ribosomes from messenger RNA at the termination of protein biosynthesis. May increase the efficiency of translation by recycling ribosomes from one round of translation to another. The sequence is that of Ribosome-recycling factor from Clostridium kluyveri (strain NBRC 12016).